The chain runs to 363 residues: uncharacterized protein (363 aa).

7 helical membrane-spanning segments follow: residues 20–40 (WFFT…NTNI), 63–83 (INFA…FLVM), 101–121 (FPLI…GVQS), 141–161 (SVWQ…FTAF), 186–206 (FSLL…IMLA), 227–247 (IFKY…CVVL), and 268–288 (FLIV…WYVL). Positions 329-363 (PRADLTPNDTLHMESKKKPLSQSPRVVIEEEDVAE) are disordered.

It is found in the membrane. This is an uncharacterized protein from Caenorhabditis elegans.